The following is a 150-amino-acid chain: Actin-depolymerizing factor 3 (150 aa).

The region spanning 7 to 150 (GVAVSEECKA…TLDVLKDHTS (144 aa)) is the ADF-H domain.

This sequence belongs to the actin-binding proteins ADF family.

In terms of biological role, actin-depolymerizing protein. Severs actin filaments (F-actin) and binds to actin monomers. The protein is Actin-depolymerizing factor 3 (ADF3) of Oryza sativa subsp. japonica (Rice).